The following is a 263-amino-acid chain: MAIKMALLTPDDLININMQLQKADSAVQEVTGLDIKGICKALYGTFSSSEKVGIVPVTSGNGIIGNFSASLHAITQYFGFDSFVTDMPDVSGYYEAVQNGAEIILMADDRTFLAHNLKNGKMANNQPCTGIIYAEIASRYLKADSKDVLVVGLGKVGFPGAEHLVQKDFRVYGYDADETLLERATSNLGIIPFDPANPKKFSIIFEATPCANTIPEAVLSENCVLSTPGIPCAISEELRDKYEVQLIAEPLGIGTASMLYSVL.

L-pyrrolysine-binding residues include leucine 8, valine 57, isoleucine 64, and alanine 107. NAD(+) contacts are provided by lysine 155, valine 156, aspartate 175, cysteine 210, proline 228, isoleucine 230, and glutamate 249.

This sequence belongs to the PylD family.

The catalysed reaction is (3R)-3-methyl-D-ornithyl-N(6)-L-lysine + NAD(+) = L-pyrrolysine + NH4(+) + NADH + 2 H(+). The protein operates within amino-acid biosynthesis; L-pyrrolysine biosynthesis. Catalyzes the ultimate step of the pyrrolysine biosynthesis pathway by converting the isopeptide (3R)-3-methyl-D-ornithyl-N(6)-L-lysine to the 22nd proteinogenic amino acid. Is able to use surrogate substrates such as (3R)-D-ornithyl-N(6)-L-lysine in vitro. The sequence is that of Pyrrolysine synthase from Methanosarcina barkeri (strain Fusaro / DSM 804).